Consider the following 370-residue polypeptide: Aspartate-semialdehyde dehydrogenase 1 (370 aa).

NADP(+) contacts are provided by residues Arg-9 to Val-12, Thr-36 to Ser-37, and Gln-72. Arg-101 provides a ligand contact to phosphate. Cys-134 functions as the Acyl-thioester intermediate in the catalytic mechanism. Cys-134 carries the post-translational modification S-cysteinyl cysteine; in inhibited form. Gln-161 lines the substrate pocket. NADP(+) contacts are provided by residues Ser-164 to Gly-165 and Pro-192. Glu-240 contributes to the substrate binding site. Lys-243 lines the phosphate pocket. A substrate-binding site is contributed by Arg-267. His-274 acts as the Proton acceptor in catalysis. Gln-350 lines the NADP(+) pocket.

The protein belongs to the aspartate-semialdehyde dehydrogenase family. Homodimer.

It catalyses the reaction L-aspartate 4-semialdehyde + phosphate + NADP(+) = 4-phospho-L-aspartate + NADPH + H(+). It participates in amino-acid biosynthesis; L-lysine biosynthesis via DAP pathway; (S)-tetrahydrodipicolinate from L-aspartate: step 2/4. Its pathway is amino-acid biosynthesis; L-methionine biosynthesis via de novo pathway; L-homoserine from L-aspartate: step 2/3. The protein operates within amino-acid biosynthesis; L-threonine biosynthesis; L-threonine from L-aspartate: step 2/5. Its activity is regulated as follows. Inhibited by S-methyl-L-cysteine sulfoxide in vitro, via the formation of a covalently bound cysteine at the active site Cys-134. Functionally, catalyzes the NADPH-dependent formation of L-aspartate-semialdehyde (L-ASA) by the reductive dephosphorylation of L-aspartyl-4-phosphate. The protein is Aspartate-semialdehyde dehydrogenase 1 (asd1) of Vibrio cholerae serotype O1 (strain ATCC 39315 / El Tor Inaba N16961).